The sequence spans 546 residues: MTPLVSRLSRLWAIMRKPRAAVGSGHRKQAASQEGRQKHAKNNSQAKPSACDGMIAECPGAPAGLARQPEEVVLQASVSSYHLFRDVAEVTAFRGSLLSWYDQEKRDLPWRRRAEDEMDLDRRAYAVWVSEVMLQQTQVATVINYYTGWMQKWPTLQDLASASLEEVNQLWAGLGYYSRGRRLQEGARKVVEELGGHMPRTAETLQQLLPGVGRYTAGAIASIAFGQATGVVDGNVARVLCRVRAIGADPSSTLVSQQLWGLAQQLVDPARPGDFNQAAMELGATVCTPQRPLCSQCPVESLCRARQRVEQEQLLASGSLSGSPDVEECAPNTGQCHLCLPPSEPWDQTLGVVNFPRKASRKPPREESSATCVLEQPGALGAQILLVQRPNSGLLAGLWEFPSVTWEPSEQLQRKALLQELQRWAGPLPATHLRHLGEVVHTFSHIKLTYQVYGLALEGQTPVTTVPPGARWLTQEEFHTAAVSTAMKKVFRVYQGQQPGTCMGSKRSQVSSPCSRKKPRMGQQVLDNFFRSHISTDAHSLNSAAQ.

A disordered region spans residues 19 to 51 (RAAVGSGHRKQAASQEGRQKHAKNNSQAKPSAC). E131 functions as the Proton donor/acceptor in the catalytic mechanism. [4Fe-4S] cluster contacts are provided by C287, C294, C297, and C303. Residues 364–495 (PREESSATCV…AMKKVFRVYQ (132 aa)) form the Nudix hydrolase domain. The Nudix box motif lies at 404–426 (VTWEPSEQLQRKALLQELQRWAG).

The protein belongs to the Nth/MutY family. The cofactor is [4Fe-4S] cluster.

It is found in the nucleus. Its subcellular location is the mitochondrion. It catalyses the reaction Hydrolyzes free adenine bases from 7,8-dihydro-8-oxoguanine:adenine mismatched double-stranded DNA, leaving an apurinic site.. Functionally, involved in oxidative DNA damage repair. Initiates repair of A*oxoG to C*G by removing the inappropriately paired adenine base from the DNA backbone. Possesses both adenine and 2-OH-A DNA glycosylase activities. This chain is Adenine DNA glycosylase (MUTYH), found in Homo sapiens (Human).